The chain runs to 60 residues: Conotoxin Pu5.6 (60 aa).

A signal peptide spans 1–19 (MRCVPVFVILLLLIASAAS). Residues 20-47 (IDAQQKTKDDAPLTSLNDNALQQHWNKR) constitute a propeptide that is removed on maturation.

The protein belongs to the conotoxin T superfamily. Contains 2 disulfide bonds that can be either 'C1-C3, C2-C4' or 'C1-C4, C2-C3', since these disulfide connectivities have been observed for conotoxins with cysteine framework V (for examples, see AC P0DQQ7 and AC P81755). Expressed by the venom duct.

It is found in the secreted. The sequence is that of Conotoxin Pu5.6 from Conus pulicarius (Flea-bitten cone).